The sequence spans 353 residues: COMPASS component SPP1 (353 aa).

The PHD-type zinc-finger motif lies at 22–72 (DVYCICKRPDYGELMVGCDGCDDWFHFTCLHIPEQFKDLVFSFYCPYCQAG). Zn(2+) is bound by residues cysteine 25, cysteine 27, cysteine 39, cysteine 42, histidine 47, cysteine 50, cysteine 66, and cysteine 69. The non coventional C3H-type zinc finger stretch occupies residues 83-124 (NGEGSLPKTLWKRKCRISDCYKPCLQDSKYCSEEHGREFVND). Serine 87 is modified (phosphoserine). Cysteine 97, cysteine 102, cysteine 113, and histidine 117 together coordinate Zn(2+). Residues 235-244 (VECGKEDSKG) are compositionally biased toward basic and acidic residues. The interval 235 to 255 (VECGKEDSKGTKRKKKKNSSR) is disordered. Residues 245-255 (TKRKKKKNSSR) are compositionally biased toward basic residues.

As to quaternary structure, component of the Set1C/COMPASS complex which consists of SET1(2), BRE2(2), SPP1(2), SDC1(1), SHG1(1), SWD1(1), SWD2(1), and SWD3(1).

The protein resides in the nucleus. Component of the Set1C/COMPASS complex that specifically mono-, di- and trimethylates histone H3 to form H3K4me1/2/3, which subsequently plays a role in telomere length maintenance and transcription elongation regulation. COMPASS recognizes ubiquitinated H2B on one face of the nucleosome which stimulates the methylation of H3 on the opposing face. SPP1/CPS40 can recognize methylated histone lysine residue H3K4me3 or unmethylated H3K4. Stimulates the RNA binding activity of SET1. The chain is COMPASS component SPP1 from Saccharomyces cerevisiae (strain ATCC 204508 / S288c) (Baker's yeast).